A 74-amino-acid polypeptide reads, in one-letter code: CLAVATA3/ESR (CLE)-related protein 19 (74 aa).

Residues 1 to 24 (MKIKGLMILASSLLILAFIHQSES) form the signal peptide. N-linked (GlcNAc...) asparagine glycans are attached at residues N34 and N54. A hydroxyproline mark is found at P65 and P68. O-linked (Ara...) hydroxyproline glycosylation is present at P68.

This sequence belongs to the CLV3/ESR signal peptide family. In terms of processing, the O-glycosylation (arabinosylation) of the hydroxyproline Pro-68 enhances binding affinity of the CLE19p peptide for its receptor. Mostly expressed in heart-shape embryos, pollen and young flower buds, and, to a lower extent, in inflorescence, leaves and roots.

It localises to the secreted. The protein localises to the extracellular space. Extracellular signal peptide that regulates cell fate. Represses root apical meristem maintenance. In Arabidopsis thaliana (Mouse-ear cress), this protein is CLAVATA3/ESR (CLE)-related protein 19.